The primary structure comprises 336 residues: Dihydroorotate dehydrogenase (quinone) (336 aa).

FMN-binding positions include 62-66 (AGLDK) and Thr-86. Lys-66 lines the substrate pocket. 111–115 (NRMGF) lines the substrate pocket. Residues Asn-139 and Asn-172 each contribute to the FMN site. Residue Asn-172 participates in substrate binding. Ser-175 serves as the catalytic Nucleophile. A substrate-binding site is contributed by Asn-177. The FMN site is built by Lys-217 and Thr-245. 246–247 (NT) provides a ligand contact to substrate. FMN-binding positions include Gly-268, Gly-297, and 318-319 (YS).

This sequence belongs to the dihydroorotate dehydrogenase family. Type 2 subfamily. Monomer. FMN serves as cofactor.

Its subcellular location is the cell membrane. It catalyses the reaction (S)-dihydroorotate + a quinone = orotate + a quinol. It functions in the pathway pyrimidine metabolism; UMP biosynthesis via de novo pathway; orotate from (S)-dihydroorotate (quinone route): step 1/1. Catalyzes the conversion of dihydroorotate to orotate with quinone as electron acceptor. In Klebsiella pneumoniae subsp. pneumoniae (strain ATCC 700721 / MGH 78578), this protein is Dihydroorotate dehydrogenase (quinone).